The chain runs to 400 residues: GTPase Obg (400 aa).

Residues 1–159 (MRFVDEAVIT…REIRLELKVL (159 aa)) enclose the Obg domain. The 174-residue stretch at 160 to 333 (ADVGLLGMPN…VVYYLMDQIE (174 aa)) folds into the OBG-type G domain. GTP contacts are provided by residues 166–173 (GMPNAGKS), 191–195 (FTTMV), 213–216 (DIPG), 283–286 (NKLD), and 314–316 (SGL). The Mg(2+) site is built by serine 173 and threonine 193.

It belongs to the TRAFAC class OBG-HflX-like GTPase superfamily. OBG GTPase family. Monomer. The cofactor is Mg(2+).

Its subcellular location is the cytoplasm. Its function is as follows. An essential GTPase which binds GTP, GDP and possibly (p)ppGpp with moderate affinity, with high nucleotide exchange rates and a fairly low GTP hydrolysis rate. Plays a role in control of the cell cycle, stress response, ribosome biogenesis and in those bacteria that undergo differentiation, in morphogenesis control. The chain is GTPase Obg from Acinetobacter baylyi (strain ATCC 33305 / BD413 / ADP1).